A 913-amino-acid chain; its full sequence is Chitin synthase 1 (913 aa).

A disordered region spans residues 1–27 (MSGAPPPSSGFAPRSYGQQPLSHAPRS). Positions 237, 241, and 291 each coordinate UDP-N-acetyl-alpha-D-glucosamine. Asn-420 is a glycosylation site (N-linked (GlcNAc...) asparagine). Asp-496 is an active-site residue. Asn-510 carries N-linked (GlcNAc...) asparagine glycosylation. Transmembrane regions (helical) follow at residues 539-559 (WLNG…RIYS), 581-601 (YTAF…FIVF), 625-645 (AVYI…IIGL), 658-678 (FVGA…AGIF), 684-704 (TVHS…ASAL), and 711-731 (IFMT…IFTI). The Conserved SWG motif motif lies at 741–743 (SWG). Helical transmembrane passes span 800 to 820 (VLLT…YFAS) and 825 to 845 (MPVL…GSIG). Asn-867 and Asn-900 each carry an N-linked (GlcNAc...) asparagine glycan.

Belongs to the chitin synthase family. Class II subfamily. As to quaternary structure, homodimer. Requires Mn(2+) as cofactor.

It is found in the cell membrane. The catalysed reaction is [(1-&gt;4)-N-acetyl-beta-D-glucosaminyl](n) + UDP-N-acetyl-alpha-D-glucosamine = [(1-&gt;4)-N-acetyl-beta-D-glucosaminyl](n+1) + UDP + H(+). The activity is inhibited by nikkomycin Z (NikZ). Its function is as follows. Polymerizes chitin, a structural polymer of the cell wall and septum, by transferring the sugar moiety of UDP-GlcNAc to the non-reducing end of the growing chitin polymer. Involved in mycelial growth, sporangial production, zoospore release and pathogenesis. The chain is Chitin synthase 1 from Phytophthora sojae (strain P6497) (Soybean stem and root rot agent).